A 78-amino-acid chain; its full sequence is uncharacterized protein (78 aa).

This is an uncharacterized protein from Treponema pallidum (strain Nichols).